We begin with the raw amino-acid sequence, 200 residues long: 3-isopropylmalate dehydratase small subunit (200 aa).

Belongs to the LeuD family. LeuD type 1 subfamily. In terms of assembly, heterodimer of LeuC and LeuD.

The enzyme catalyses (2R,3S)-3-isopropylmalate = (2S)-2-isopropylmalate. It participates in amino-acid biosynthesis; L-leucine biosynthesis; L-leucine from 3-methyl-2-oxobutanoate: step 2/4. In terms of biological role, catalyzes the isomerization between 2-isopropylmalate and 3-isopropylmalate, via the formation of 2-isopropylmaleate. This chain is 3-isopropylmalate dehydratase small subunit, found in Proteus mirabilis (strain HI4320).